Reading from the N-terminus, the 493-residue chain is UDP-N-acetylmuramoyl-L-alanyl-D-glutamate--2,6-diaminopimelate ligase (493 aa).

UDP-N-acetyl-alpha-D-muramoyl-L-alanyl-D-glutamate is bound by residues Leu30 and Ser32. 117 to 123 provides a ligand contact to ATP; the sequence is GTNGKTT. UDP-N-acetyl-alpha-D-muramoyl-L-alanyl-D-glutamate-binding positions include Asn158, 159–160, Ser186, Gln192, and Arg194; that span reads TT. The residue at position 226 (Lys226) is an N6-carboxylysine. Meso-2,6-diaminopimelate-binding positions include Arg388, 412–415, Gly463, and Glu467; that span reads DNPR. A Meso-diaminopimelate recognition motif motif is present at residues 412-415; that stretch reads DNPR.

This sequence belongs to the MurCDEF family. MurE subfamily. The cofactor is Mg(2+). In terms of processing, carboxylation is probably crucial for Mg(2+) binding and, consequently, for the gamma-phosphate positioning of ATP.

The protein localises to the cytoplasm. It catalyses the reaction UDP-N-acetyl-alpha-D-muramoyl-L-alanyl-D-glutamate + meso-2,6-diaminopimelate + ATP = UDP-N-acetyl-alpha-D-muramoyl-L-alanyl-gamma-D-glutamyl-meso-2,6-diaminopimelate + ADP + phosphate + H(+). The protein operates within cell wall biogenesis; peptidoglycan biosynthesis. Catalyzes the addition of meso-diaminopimelic acid to the nucleotide precursor UDP-N-acetylmuramoyl-L-alanyl-D-glutamate (UMAG) in the biosynthesis of bacterial cell-wall peptidoglycan. This chain is UDP-N-acetylmuramoyl-L-alanyl-D-glutamate--2,6-diaminopimelate ligase, found in Vibrio parahaemolyticus serotype O3:K6 (strain RIMD 2210633).